Here is a 248-residue protein sequence, read N- to C-terminus: Sugar fermentation stimulation protein homolog (248 aa).

This sequence belongs to the SfsA family.

The polypeptide is Sugar fermentation stimulation protein homolog (Methylorubrum extorquens (strain PA1) (Methylobacterium extorquens)).